The following is a 975-amino-acid chain: E3 ubiquitin-protein ligase BRE1A (975 aa).

Residues 1 to 30 (MSGIGNKRAAGEPGTSMPPEKKAAVEDSGT) form a disordered region. Residue Lys-21 is modified to N6-acetyllysine. Phosphoserine is present on Ser-41. A coiled-coil region spans residues 43–90 (TEELDIRTLQTKNRKLAEMLDQRQAIEDELREHIEKLERRQATDDASL). The segment at 125-155 (KALVVPEPEPDSDSNQERKDDRERGEGQEPA) is disordered. Residues Ser-136 and Ser-138 each carry the phosphoserine modification. Positions 139-151 (NQERKDDRERGEG) are enriched in basic and acidic residues. Coiled coils occupy residues 168–375 (EEME…EQVV) and 429–898 (SLHK…TTKK). Residues Lys-348 and Lys-510 each carry the N6-acetyllysine modification. Positions 507 to 622 (DLNKTRLRSG…GKHDDGRKKE (116 aa)) are disordered. Ser-522 bears the Phosphoserine mark. Residues 527–540 (EDPKDEPAELKPDS) show a composition bias toward basic and acidic residues. The span at 543-552 (LSSQSSASKA) shows a compositional bias: low complexity. The span at 558–622 (NEIKSKRDEE…GKHDDGRKKE (65 aa)) shows a compositional bias: basic and acidic residues. Phosphoserine is present on Ser-562. The segment at 922–961 (CPCCNMRKKDAVLTKCFHVFCFECVKTRYDTRQRKCPKCN) adopts an RING-type zinc-finger fold.

Belongs to the BRE1 family. In terms of assembly, component of the RNF20/40 complex (also known as BRE1 complex) probably composed of 2 copies of RNF20/BRE1A and 2 copies of RNF40/BRE1B. Interacts with UBE2E1/UBCH6. Interacts with p53/TP53 and WAC. Interacts with PAF1; the interaction mediates the association of the PAF1 and RNF20/40 complexes which is a prerequsite for recruitment of UBE2A/B. Interacts with isoform 1 and isoform 2 of PA2G4. Interacts with FBXL19. As to quaternary structure, (Microbial infection) Interacts with human herpesvirus 8 (KSHV) protein RTA/ORF50; this interaction targets the SMC5-SMC6 complex for proteasomal degradation. In terms of tissue distribution, expressed in the normal brain and also in malignant gliomas (at protein level).

It is found in the nucleus. It catalyses the reaction S-ubiquitinyl-[E2 ubiquitin-conjugating enzyme]-L-cysteine + [acceptor protein]-L-lysine = [E2 ubiquitin-conjugating enzyme]-L-cysteine + N(6)-ubiquitinyl-[acceptor protein]-L-lysine.. It functions in the pathway protein modification; protein ubiquitination. In terms of biological role, component of the RNF20/40 E3 ubiquitin-protein ligase complex that mediates monoubiquitination of 'Lys-120' of histone H2B (H2BK120ub1). H2BK120ub1 gives a specific tag for epigenetic transcriptional activation and is also prerequisite for histone H3 'Lys-4' and 'Lys-79' methylation (H3K4me and H3K79me, respectively). It thereby plays a central role inb histone code and gene regulation. The RNF20/40 complex forms a H2B ubiquitin ligase complex in cooperation with the E2 enzyme UBE2A or UBE2B; reports about the cooperation with UBE2E1/UBCH are contradictory. Required for transcriptional activation of Hox genes. Recruited to the MDM2 promoter, probably by being recruited by p53/TP53, and thereby acts as a transcriptional coactivator. Mediates the polyubiquitination of isoform 2 of PA2G4 in cancer cells leading to its proteasome-mediated degradation. Functionally, (Microbial infection) Promotes the human herpesvirus 8 (KSHV) lytic cycle by inducing the expression of lytic viral genes including the latency switch gene RTA/ORF50. The chain is E3 ubiquitin-protein ligase BRE1A (RNF20) from Homo sapiens (Human).